We begin with the raw amino-acid sequence, 364 residues long: Anhydro-N-acetylmuramic acid kinase (364 aa).

12–19 contributes to the ATP binding site; the sequence is GTSHDAID.

The protein belongs to the anhydro-N-acetylmuramic acid kinase family.

The enzyme catalyses 1,6-anhydro-N-acetyl-beta-muramate + ATP + H2O = N-acetyl-D-muramate 6-phosphate + ADP + H(+). Its pathway is amino-sugar metabolism; 1,6-anhydro-N-acetylmuramate degradation. The protein operates within cell wall biogenesis; peptidoglycan recycling. Its function is as follows. Catalyzes the specific phosphorylation of 1,6-anhydro-N-acetylmuramic acid (anhMurNAc) with the simultaneous cleavage of the 1,6-anhydro ring, generating MurNAc-6-P. Is required for the utilization of anhMurNAc either imported from the medium or derived from its own cell wall murein, and thus plays a role in cell wall recycling. This chain is Anhydro-N-acetylmuramic acid kinase, found in Gamma-proteobacterium EBAC31A08.